Here is a 139-residue protein sequence, read N- to C-terminus: Ribonuclease P protein component (139 aa).

The protein belongs to the RnpA family. As to quaternary structure, consists of a catalytic RNA component (M1 or rnpB) and a protein subunit.

It carries out the reaction Endonucleolytic cleavage of RNA, removing 5'-extranucleotides from tRNA precursor.. RNaseP catalyzes the removal of the 5'-leader sequence from pre-tRNA to produce the mature 5'-terminus. It can also cleave other RNA substrates such as 4.5S RNA. The protein component plays an auxiliary but essential role in vivo by binding to the 5'-leader sequence and broadening the substrate specificity of the ribozyme. The sequence is that of Ribonuclease P protein component from Chlamydia felis (strain Fe/C-56) (Chlamydophila felis).